The sequence spans 310 residues: Fucose-specific lectin (310 aa).

Tandem repeats lie at residues 1 to 53 (MSTP…KNVI), 54 to 103 (AKAK…AGAK), 104 to 151 (FTVA…EGTN), 152 to 209 (LGVA…FDKA), 210 to 256 (PPRC…DKRT), and 257 to 310 (ITPV…PPAE). The interval 1-310 (MSTPGAQEVL…LGRRALPPAE (310 aa)) is 6 X approximate tandem repeats. Residues Arg25, Glu37, Trp44, Arg73, Glu85, Trp94, Arg126, Glu138, Trp146, Arg177, Gln189, Trp198, Arg230, Gln242, Arg277, and Glu291 each coordinate beta-L-fucose.

The protein belongs to the fungal fucose-specific lectin family.

In terms of biological role, lectin that specifically binds to L-fucose and weakly reacts with mannose and N-acetyl-neuraminic acid. Has strongest preference for the alpha-1,6-fucosylated chain (core fucose) on glycoproteins among alpha-1,2-, alpha-1,3-, alpha-1,4-, and alpha-1,6-fucosylated chains. Binds to fucose residues of IgE in mice and human, causing antigen-independent IgE-mediated mast cell activation and anaphylactoid reactions in mice and is possibly implicated in allergic response to Aspergillus oryzae in humans. Induces secretion of pro-inflammatory cytokines IL6 and IL8 implicated in ocular diseases such as mycotic keratitis, probably through its interaction with host toll-like receptors TLR2 and TLR4, followed by up-regulation of pro-inflammatory cytokines. In Aspergillus oryzae (Yellow koji mold), this protein is Fucose-specific lectin.